We begin with the raw amino-acid sequence, 54 residues long: uncharacterized protein (54 aa).

This is an uncharacterized protein from Escherichia coli (strain K12).